A 331-amino-acid chain; its full sequence is Aldo-keto reductase family 7 member A3 (331 aa).

S6 is modified (phosphoserine). Residues M17, D44, and Y49 each coordinate NADPH. Y49 functions as the Proton donor in the catalytic mechanism. S85 carries the phosphoserine modification. Positions 113, 143, 144, 198, 200, 202, 208, 209, and 222 each coordinate NADPH. Phosphothreonine is present on T227. NADPH is bound by residues S290, Q294, and N298.

Belongs to the aldo/keto reductase family. Aldo/keto reductase 2 subfamily. Homodimer. Expressed in colon, kidney, liver, pancreas, adenocarcinoma and endometrium.

Its subcellular location is the cytoplasm. It catalyses the reaction a primary alcohol + NADP(+) = an aldehyde + NADPH + H(+). It carries out the reaction aflatoxin B1 dialdehyde + NADPH + H(+) = aflatoxin B1 C(6a)-monoaldehyde + NADP(+). The catalysed reaction is aflatoxin B1 dialdehyde + NADPH + H(+) = aflatoxin B1 C(8)-monoaldehyde + NADP(+). The enzyme catalyses aflatoxin B1 C(6a)-monoaldehyde + NADPH + 2 H(+) = aflatoxin B1 triol + NADP(+). Inhibited by citrate. In terms of biological role, catalyzes the NADPH-dependent reduction of various carbonyl-containing compounds, including aldehydes, ketones, and toxic products from cellular metabolism or environmental exposure. Can reduce the dialdehyde form of aflatoxin B1 (AFB1) into alcohol derivatives, via monoaldehydes intermediates. Can reduce the dialdehyde form of aflatoxin B1 (AFB1) into alcohol derivatives, via monoaldehydes intermediates, thus preventing the formation of protein adducts that contribute to AFB1-induced toxicity. This Homo sapiens (Human) protein is Aldo-keto reductase family 7 member A3.